The primary structure comprises 274 residues: uncharacterized protein (274 aa).

5 helical membrane passes run 9–29, 64–84, 135–155, 165–185, and 219–239; these read SLLLTEVAAYFTSTTLFVSIL, WFWHFYAFISLLNPLFTFFIL, LAGHYLLGYLFYTHTFLALLL, MSSMQFVGLGIYAIGSIWQNA, and IIVYTGIALIAQHWLIWLVLG.

This sequence belongs to the steroid 5-alpha reductase family.

The protein resides in the endoplasmic reticulum membrane. This is an uncharacterized protein from Schizosaccharomyces pombe (strain 972 / ATCC 24843) (Fission yeast).